Here is a 536-residue protein sequence, read N- to C-terminus: Membrane protein insertase YidC (536 aa).

A helical transmembrane segment spans residues 14-34; sequence ILIATAISLLFFIPYSYFFAP. The interval 43 to 69 is disordered; it reads STSMERAEQQAAPQTSSSPKEGQVSSV. The segment covering 53–68 has biased composition (polar residues); that stretch reads AAPQTSSSPKEGQVSS. Helical transmembrane passes span 312–332, 339–359, 401–421, 436–456, and 484–504; these read VVEY…LDWL, WGWA…PLTY, GANP…FFAI, WILW…PILM, and PLIF…YWFV.

This sequence belongs to the OXA1/ALB3/YidC family. Type 1 subfamily. As to quaternary structure, interacts with the Sec translocase complex via SecD. Specifically interacts with transmembrane segments of nascent integral membrane proteins during membrane integration.

It is found in the cell inner membrane. Functionally, required for the insertion and/or proper folding and/or complex formation of integral membrane proteins into the membrane. Involved in integration of membrane proteins that insert both dependently and independently of the Sec translocase complex, as well as at least some lipoproteins. Aids folding of multispanning membrane proteins. The sequence is that of Membrane protein insertase YidC from Wolinella succinogenes (strain ATCC 29543 / DSM 1740 / CCUG 13145 / JCM 31913 / LMG 7466 / NCTC 11488 / FDC 602W) (Vibrio succinogenes).